Reading from the N-terminus, the 111-residue chain is Ferredoxin, 2Fe-2S (111 aa).

Residues C10, C23, C56, and C60 each contribute to the [2Fe-2S] cluster site.

In terms of assembly, homodimer in solution. The cofactor is [2Fe-2S] cluster.

Its function is as follows. Ferredoxins are iron-sulfur proteins that transfer electrons in a wide variety of metabolic reactions. This is Ferredoxin, 2Fe-2S (fdx4) from Aquifex aeolicus (strain VF5).